The sequence spans 292 residues: Acidic endochitinase (292 aa).

Positions 1-25 are cleaved as a signal peptide; it reads MAAHKITTTLSIFFLLSSIFRSSDA. One can recognise a GH18 domain in the interval 26-292; the sequence is AGIAIYWGQN…YSDSIKGSIG (267 aa). Intrachain disulfides connect cysteine 45–cysteine 92 and cysteine 75–cysteine 82. Glutamate 152 serves as the catalytic Proton donor. Cysteine 180 and cysteine 209 are oxidised to a cystine.

Belongs to the glycosyl hydrolase 18 family. Chitinase class II subfamily.

It localises to the secreted. Its subcellular location is the extracellular space. It carries out the reaction Random endo-hydrolysis of N-acetyl-beta-D-glucosaminide (1-&gt;4)-beta-linkages in chitin and chitodextrins.. This protein functions as a defense against chitin containing fungal pathogens. This Cucumis sativus (Cucumber) protein is Acidic endochitinase.